The chain runs to 956 residues: Endogenous retrovirus group K member 8 Pol protein (956 aa).

The region spanning 57–245 is the Reverse transcriptase domain; sequence LEKGHIEPSF…TPFHYLGMQI (189 aa). The LPQG motif lies at 161–164; the sequence is LPQG. A YXDD motif is present at residues 195-198; sequence YIDD. Residues 460-590 enclose the RNase H type-1 domain; that stretch reads LENALTVFTD…ADLLVSSALI (131 aa). Residues aspartate 469, glutamate 497, aspartate 517, and aspartate 582 each contribute to the Mg(2+) site. The Integrase-type zinc finger occupies 587-628; sequence SALIKAQELHALTHVNAAGLKNKFDVTWKQAKDIVQHCTQCQ. Zn(2+) contacts are provided by histidine 596, histidine 600, cysteine 624, and cysteine 627. The Integrase catalytic domain maps to 642 to 803; it reads RGLCPNALWQ…TSAEQHLTGK (162 aa). Residues 811–859 constitute a DNA-binding region (integrase-type); sequence KLIWWKDNKNKTWEIGKVITWGRGFACVSPGENQLPVWIPTRHLKFYNE. The segment at 864–890 is disordered; the sequence is AKKSTSAETETPQSSTVDSQDEQNGDV. Polar residues predominate over residues 869-881; that stretch reads SAETETPQSSTVD.

This sequence belongs to the beta type-B retroviral polymerase family. HERV class-II K(HML-2) pol subfamily.

The catalysed reaction is DNA(n) + a 2'-deoxyribonucleoside 5'-triphosphate = DNA(n+1) + diphosphate. It catalyses the reaction Endonucleolytic cleavage to 5'-phosphomonoester.. Its function is as follows. Early post-infection, the reverse transcriptase converts the viral RNA genome into double-stranded viral DNA. The RNase H domain of the reverse transcriptase performs two functions. It degrades the RNA template and specifically removes the RNA primer from the RNA/DNA hybrid. Following nuclear import, the integrase catalyzes the insertion of the linear, double-stranded viral DNA into the host cell chromosome. Endogenous Pol proteins may have kept, lost or modified their original function during evolution. The sequence is that of Endogenous retrovirus group K member 8 Pol protein (ERVK-8) from Homo sapiens (Human).